A 415-amino-acid polypeptide reads, in one-letter code: MHFGIPSLFYLYILFSIIMRIKCVITKNLKKTKKRTCSYIPHGNMEKGIILNYIEKPNPAYLKRGKNKNKNKNKKGDIYKLRNVEILLYANRYVHEGNENFSSTTKKLLLTPKVGNKMPEGKKPDWFHVAAPTVAKYNKLKDDIKKLNLHTVCEEAQCPNIGECWNIGTATIMLLGDTCTRGCKFCSIKTSSNPLPPDINEPFNTAKAICEWNIDYVVLTSVDRDDLPDGGASHFAKTVELVKFSRPDILIECLVSDFQGNIDSVRKLAFSGLDVYAHNIETVKRLQKYVRDKRANYDQSLFVLKTAKEINPQLYTKTSIMLGLGETKEEVIQTMYDARKNNIDVITFGQYLRPTKNHLSIVQYISPQMFEYYKEEGLKMGFKYIASGPLVRSSYKAGEYFIKNLVNQRNKDKKN.

The N-terminal stretch at 1 to 23 is a signal peptide; sequence MHFGIPSLFYLYILFSIIMRIKC. [4Fe-4S] cluster contacts are provided by Cys153, Cys158, Cys164, Cys179, Cys183, Cys186, and Ser394. Residues 165–383 form the Radical SAM core domain; it reads WNIGTATIML…KEEGLKMGFK (219 aa).

It belongs to the radical SAM superfamily. Lipoyl synthase family. It depends on [4Fe-4S] cluster as a cofactor.

The protein resides in the plastid. The protein localises to the apicoplast. The enzyme catalyses [[Fe-S] cluster scaffold protein carrying a second [4Fe-4S](2+) cluster] + N(6)-octanoyl-L-lysyl-[protein] + 2 oxidized [2Fe-2S]-[ferredoxin] + 2 S-adenosyl-L-methionine + 4 H(+) = [[Fe-S] cluster scaffold protein] + N(6)-[(R)-dihydrolipoyl]-L-lysyl-[protein] + 4 Fe(3+) + 2 hydrogen sulfide + 2 5'-deoxyadenosine + 2 L-methionine + 2 reduced [2Fe-2S]-[ferredoxin]. It participates in protein modification; protein lipoylation via endogenous pathway; protein N(6)-(lipoyl)lysine from octanoyl-[acyl-carrier-protein]: step 2/2. In terms of biological role, catalyzes the radical-mediated insertion of two sulfur atoms into the C-6 and C-8 positions of the octanoyl moiety bound to the lipoyl domains of lipoate-dependent enzymes, thereby converting the octanoylated domains into lipoylated derivatives. This Plasmodium falciparum (isolate 3D7) protein is Lipoyl synthase, apicoplast.